The sequence spans 340 residues: DNA primase large subunit PriL (340 aa).

Residues Cys-229, Cys-301, Cys-310, and Cys-318 each contribute to the [4Fe-4S] cluster site.

The protein belongs to the eukaryotic-type primase large subunit family. In terms of assembly, heterodimer of a small subunit (PriS) and a large subunit (PriL). [4Fe-4S] cluster is required as a cofactor.

Its function is as follows. Regulatory subunit of DNA primase, an RNA polymerase that catalyzes the synthesis of short RNA molecules used as primers for DNA polymerase during DNA replication. Stabilizes and modulates the activity of the small subunit, increasing the rate of DNA synthesis, and conferring RNA synthesis capability. The DNA polymerase activity may enable DNA primase to also catalyze primer extension after primer synthesis. May also play a role in DNA repair. The chain is DNA primase large subunit PriL from Thermoplasma acidophilum (strain ATCC 25905 / DSM 1728 / JCM 9062 / NBRC 15155 / AMRC-C165).